We begin with the raw amino-acid sequence, 86 residues long: Defensin-like protein 97 (86 aa).

The signal sequence occupies residues methionine 1–glycine 27. Intrachain disulfides connect cysteine 31/cysteine 74, cysteine 38/cysteine 60, cysteine 44/cysteine 71, and cysteine 48/cysteine 73.

Belongs to the DEFL family.

It is found in the secreted. The polypeptide is Defensin-like protein 97 (LCR85) (Arabidopsis thaliana (Mouse-ear cress)).